The chain runs to 935 residues: Transmembrane channel-like protein 1 (935 aa).

Disordered regions lie at residues 1–21 (MPRH…DEGK) and 37–204 (ERGK…LGSL). Composition is skewed to basic and acidic residues over residues 37–47 (ERGKIKQASRD), 54–79 (RNGE…EKKH), 109–136 (DKSS…EKDV), 152–163 (NHEKTKQHLKEE), and 172–184 (PETT…KSES). Transmembrane regions (helical) follow at residues 303-340 (SSVA…MGKP), 392-423 (RMPL…ANEE), 480-510 (LTRF…VRRS), 523-550 (WWER…ISTL), 555-589 (PRIA…QLKR), 633-670 (WETM…VRFL), 690-710 (VSGN…GAFY), 714-736 (LPAL…VMCC), 751-774 (NFYM…TIVS), and 818-851 (LVLP…KKKL). Residues 874–886 (EQARKAGEQRRNS) show a composition bias toward basic and acidic residues. Residues 874–935 (EQARKAGEQR…QQPQKNSKKR (62 aa)) form a disordered region. Polar residues-rich tracts occupy residues 899–919 (SHVS…TSSG) and 926–935 (QQPQKNSKKR).

It belongs to the TMC family. Interacts specifically with isoform CD3 of PCDH15A (via cytoplasmic domain). As to expression, in adults, expression is restricted to the hair cells of inner ear and lateral line organ. Expressed at higher levels in the larval lateral-line neuromasts than in the larval inner ear. Expressed in the sensory hair cell patches of the ear at 4 days post fertilization (dpf).

The protein localises to the cell membrane. It carries out the reaction Ca(2+)(in) = Ca(2+)(out). Its function is as follows. Pore-forming subunit of the mechanotransducer (MET) non-selective cation channel complex located at the tips of hair-cell stereocilia. Highly permeable to calcium and likely transports monovalent cations. In Danio rerio (Zebrafish), this protein is Transmembrane channel-like protein 1.